The sequence spans 180 residues: Protein Flattop (180 aa).

The disordered stretch occupies residues 111–180 (PQISGKASGK…AGDKVLQAQS (70 aa)).

It belongs to the Flattop family.

It is found in the cytoplasm. The protein localises to the cytoskeleton. Its subcellular location is the cilium basal body. The protein resides in the cell projection. It localises to the cilium. It is found in the apical cell membrane. The protein localises to the cilium axoneme. In terms of biological role, microtubule inner protein (MIP) part of the dynein-decorated doublet microtubules (DMTs) in cilia axoneme. Acts as a regulator of cilium basal body docking and positioning in mono- and multiciliated cells. Regulates basal body docking and cilia formation in multiciliated lung cells. Regulates kinocilium positioning and stereocilia bundle morphogenesis in the inner ear. The chain is Protein Flattop from Xenopus laevis (African clawed frog).